Reading from the N-terminus, the 799-residue chain is Signal transducer and activator of transcription 5A (799 aa).

Tyr90 is modified (phosphotyrosine). Ser128 is subject to Phosphoserine. The 98-residue stretch at 589–686 folds into the SH2 domain; that stretch reads WNDGAILGFV…EVFSKYYTPV (98 aa). At Tyr682 the chain carries Phosphotyrosine. Tyr699 carries the phosphotyrosine; by JAK2 modification. The tract at residues 778–799 is disordered; that stretch reads DSLDPRLSPPAGLFASTRGSLS. Phosphoserine is present on Ser785.

This sequence belongs to the transcription factor STAT family. In terms of assembly, forms a homodimer or a heterodimer with a related family member. Binds NR3C1. Interacts with NCOA1 and SOCS7. Interacts with ERBB4. Interacts with EBF4. Interacts with CD69. In terms of processing, ISGylated. Tyrosine phosphorylated in response to KITLG/SCF, IL2, IL3, IL7, IL15, CSF2/GMCSF, GH1, PRL, EPO and THPO. Activated KIT promotes phosphorylation on tyrosine residues and subsequent translocation to the nucleus. Tyrosine phosphorylated in response to constitutively activated FGFR1, FGFR2, FGFR3 and FGFR4. Tyrosine phosphorylation is required for DNA-binding activity and dimerization. Serine phosphorylation is also required for maximal transcriptional activity. Tyrosine phosphorylated in response to signaling via activated FLT3; wild-type FLT3 results in much weaker phosphorylation than constitutively activated mutant FLT3. Alternatively, can be phosphorylated by JAK2 at Tyr-699.

The protein resides in the cytoplasm. It localises to the nucleus. Its function is as follows. Carries out a dual function: signal transduction and activation of transcription. Mediates cellular responses to the cytokine KITLG/SCF and other growth factors. May mediate cellular responses to activated FGFR1, FGFR2, FGFR3 and FGFR4. Binds to the GAS element and activates PRL-induced transcription. Regulates the expression of milk proteins during lactation. The sequence is that of Signal transducer and activator of transcription 5A (STAT5A) from Sus scrofa (Pig).